A 209-amino-acid chain; its full sequence is Proteasome subunit beta (209 aa).

The propeptide at 1–10 (MVEQSDTMKG) is removed in mature form; by autocatalysis. Thr11 functions as the Nucleophile in the catalytic mechanism.

This sequence belongs to the peptidase T1B family. As to quaternary structure, the 20S proteasome core is composed of 14 alpha and 14 beta subunits that assemble into four stacked heptameric rings, resulting in a barrel-shaped structure. The two inner rings, each composed of seven catalytic beta subunits, are sandwiched by two outer rings, each composed of seven alpha subunits. The catalytic chamber with the active sites is on the inside of the barrel. Has a gated structure, the ends of the cylinder being occluded by the N-termini of the alpha-subunits. Is capped at one or both ends by the proteasome regulatory ATPase, PAN.

It is found in the cytoplasm. It carries out the reaction Cleavage of peptide bonds with very broad specificity.. With respect to regulation, the formation of the proteasomal ATPase PAN-20S proteasome complex, via the docking of the C-termini of PAN into the intersubunit pockets in the alpha-rings, triggers opening of the gate for substrate entry. Interconversion between the open-gate and close-gate conformations leads to a dynamic regulation of the 20S proteasome proteolysis activity. Component of the proteasome core, a large protease complex with broad specificity involved in protein degradation. The protein is Proteasome subunit beta of Methanospirillum hungatei JF-1 (strain ATCC 27890 / DSM 864 / NBRC 100397 / JF-1).